Reading from the N-terminus, the 143-residue chain is MATGKTVKDVSPHDFVKAYASHLKRSGKIELPLWTDIVKTGRLKELAPYDPDWYYIRAASMARKIYLRGGLGVGAFRRIYGGSKRNGSRPPHFCKSSGGIARHILQQLETMSIVELDTKGGRRITSSGQRDLDQVAGRIAAES.

This sequence belongs to the eukaryotic ribosomal protein eS19 family.

This Arabidopsis thaliana (Mouse-ear cress) protein is Small ribosomal subunit protein eS19y (RPS19B).